Reading from the N-terminus, the 1106-residue chain is DNA polymerase delta catalytic subunit (1106 aa).

Residues 1 to 28 (MDGKRRPGPGPGVPPKRARGGLWDEDEA) form a disordered region. The Nuclear localization signal motif lies at 4–19 (KRRPGPGPGVPPKRAR). Omega-N-methylarginine is present on R19. K573 participates in a covalent cross-link: Glycyl lysine isopeptide (Lys-Gly) (interchain with G-Cter in SUMO2). Positions 1011, 1014, 1025, and 1028 each coordinate Zn(2+). The CysA-type zinc-finger motif lies at 1011-1028 (CIGCRTVLSHQGAVCKFC). 4 residues coordinate [4Fe-4S] cluster: C1057, C1060, C1070, and C1075. The short motif at 1057-1075 (CQRCQGSLHEDVICTSRDC) is the CysB motif element.

It belongs to the DNA polymerase type-B family. Component of the tetrameric DNA polymerase delta complex (Pol-delta4), which consists of POLD1/p125, POLD2/p50, POLD3/p66/p68 and POLD4/p12, with POLD1 bearing both DNA polymerase and 3' to 5' proofreading exonuclease activities. Within Pol-delta4, directly interacts with POLD2 and POLD4. Following genotoxic stress by DNA-damaging agents, such as ultraviolet light and methyl methanesulfonate, or by replication stress induced by treatment with hydroxyurea or aphidicolin, Pol-delta4 is converted into a trimeric form of the complex (Pol-delta3) by POLD4 degradation. Pol-delta3 is the major form at S phase replication sites and DNA damage sites. POLD1 displays different catalytic properties depending upon the complex it is found in. It exhibits higher proofreading activity and fidelity than Pol-delta4, making it particularly well suited to respond to DNA damage. Directly interacts with PCNA, as do POLD3 and POLD4; this interaction stimulates Pol-delta4 polymerase activity. As POLD2 and POLD4, directly interacts with WRNIP1; this interaction stimulates DNA polymerase delta-mediated DNA synthesis, independently of the presence of PCNA. This stimulation may be due predominantly to an increase of initiation frequency and also to increased processivity. Also observed as a dimeric complex with POLD2 (Pol-delta2). Pol-delta2 is relatively insensitive to the PCNA stimulation (2-5-fold) compared to Pol-delta4 that is stimulated by over 50-fold. Interacts with POLDIP2; this interaction is indirect and most probably mediated through POLD2-binding. Interacts with CIAO1. Interacts with POLDIP2. Interacts with RFC1. The cofactor is [4Fe-4S] cluster.

It localises to the nucleus. The catalysed reaction is DNA(n) + a 2'-deoxyribonucleoside 5'-triphosphate = DNA(n+1) + diphosphate. With respect to regulation, regulated by alteration of quaternary structure. Exhibits burst rates of DNA synthesis are about 5 times faster in the presence of POLD4 (Pol-delta4 complex) than in its absence (Pol-delta3 complex), while the affinity of the enzyme for its DNA and dNTP substrates appears unchanged. The Pol-delta3 complex is more likely to proofread DNA synthesis because it cleaves single-stranded DNA twice as fast and transfers mismatched DNA from the polymerase to the exonuclease sites 9 times faster compared to the Pol-delta3 complex. Pol-delta3 also extends mismatched primers 3 times more slowly in the absence of POLD4. The conversion of Pol-delta4 into Pol-delta3 is induced by genotoxic stress or by replication stress leading POLD4 degradation. Stimulated in the presence of PCNA. This stimulation is further increased in the presence of KCTD13/PDIP1, most probably via direct interaction between KCTD13 and POLD2. Functionally, as the catalytic component of the trimeric (Pol-delta3 complex) and tetrameric DNA polymerase delta complexes (Pol-delta4 complex), plays a crucial role in high fidelity genome replication, including in lagging strand synthesis, and repair. Exhibits both DNA polymerase and 3'- to 5'-exonuclease activities. Requires the presence of accessory proteins POLD2, POLD3 and POLD4 for full activity. Depending upon the absence (Pol-delta3) or the presence of POLD4 (Pol-delta4), displays differences in catalytic activity. Most notably, expresses higher proofreading activity in the context of Pol-delta3 compared with that of Pol-delta4. Although both Pol-delta3 and Pol-delta4 process Okazaki fragments in vitro, Pol-delta3 may be better suited to fulfill this task, exhibiting near-absence of strand displacement activity compared to Pol-delta4 and stalling on encounter with the 5'-blocking oligonucleotides. Pol-delta3 idling process may avoid the formation of a gap, while maintaining a nick that can be readily ligated. Along with DNA polymerase kappa, DNA polymerase delta carries out approximately half of nucleotide excision repair (NER) synthesis following UV irradiation. Under conditions of DNA replication stress, in the presence of POLD3 and POLD4, may catalyze the repair of broken replication forks through break-induced replication (BIR). Involved in the translesion synthesis (TLS) of templates carrying O6-methylguanine, 8oxoG or abasic sites. The sequence is that of DNA polymerase delta catalytic subunit (POLD1) from Bos taurus (Bovine).